Consider the following 555-residue polypeptide: uncharacterized protein (555 aa).

Over 1–83 the chain is Extracellular; that stretch reads MSNEDETTRL…GRRKLLCLYG (83 aa). A helical membrane pass occupies residues 84–104; sequence LVMIICIAESISMTATIPLVM. Residues 105-125 are Cytoplasmic-facing; sequence DKVAEGISDENGHYDSVAVQT. Residues 126–146 traverse the membrane as a helical segment; that stretch reads IVSSISSSTMMIAGAISIFMA. Residues 147-188 lie on the Extracellular side of the membrane; it reads GKWGELSDRIGRVRVFKYMSGIRVIGLLTHVFTLSSKMKYHK. The chain crosses the membrane as a helical span at residues 189–209; that stretch reads WAIVLTACIVPSFGGLFALVA. The Cytoplasmic segment spans residues 210 to 229; it reads NGNSYVSDIVKTEHRMVTIG. Residues 230-250 traverse the membrane as a helical segment; it reads IMMSCIYATMGVGPMFGSFLV. Residues 251-257 are Extracellular-facing; that stretch reads KWTHGNG. Residues 258–278 form a helical membrane-spanning segment; the sequence is FIPIYTSIAFVILALIICETI. Topologically, residues 279-356 are cytoplasmic; that stretch reads MVEPRHETQM…LVPRHTVILL (78 aa). Residues 289-311 form a disordered region; it reads AHSQSTYTKRREKLRSQSGSDDA. The chain crosses the membrane as a helical span at residues 357 to 377; sequence IVLDILFVCGTTSCMPALILF. Residues 378 to 386 are Extracellular-facing; the sequence is STYEYKWHA. The chain crosses the membrane as a helical span at residues 387–407; the sequence is VELGYFISILGIGRGVVLLVV. Residues 408–428 are Cytoplasmic-facing; that stretch reads SPTLLYTLKRIYQHLNHSIDK. Residues 429-449 traverse the membrane as a helical segment; the sequence is IDIFCIQFSMIVITLSLFVMI. The Extracellular portion of the chain corresponds to 450 to 459; sequence RFGEKTPTSM. A helical transmembrane segment spans residues 460 to 480; that stretch reads IIFALLQALSAFCSPTLQSGI. The Cytoplasmic portion of the chain corresponds to 481–491; that stretch reads IKYTSKKHTGE. The helical transmembrane segment at 492-512 threads the bilayer; the sequence is MFGAMALVRSCVMLVIPPILL. Residues 513–523 lie on the Extracellular side of the membrane; the sequence is KLYGSTVSVNP. Residues 524–544 traverse the membrane as a helical segment; the sequence is SLFMYIPFSTSIVAILLTFFL. At 545–555 the chain is on the cytoplasmic side; that stretch reads RIYKNPPLDGP.

Its subcellular location is the membrane. This is an uncharacterized protein from Saccharomyces cerevisiae (strain ATCC 204508 / S288c) (Baker's yeast).